The sequence spans 224 residues: 7-cyano-7-deazaguanine synthase (224 aa).

12–22 contacts ATP; that stretch reads LSGGLDSSTVT. The Zn(2+) site is built by Cys-193, Cys-201, Cys-204, and Cys-207.

Belongs to the QueC family. Requires Zn(2+) as cofactor.

The catalysed reaction is 7-carboxy-7-deazaguanine + NH4(+) + ATP = 7-cyano-7-deazaguanine + ADP + phosphate + H2O + H(+). Its pathway is purine metabolism; 7-cyano-7-deazaguanine biosynthesis. Its function is as follows. Catalyzes the ATP-dependent conversion of 7-carboxy-7-deazaguanine (CDG) to 7-cyano-7-deazaguanine (preQ(0)). The chain is 7-cyano-7-deazaguanine synthase from Prochlorococcus marinus (strain MIT 9301).